The primary structure comprises 715 residues: Targeting protein for Xklp2-B (715 aa).

Residues Asn36–Leu167 form a disordered region. Positions Leu47–Gln56 are enriched in polar residues. The segment covering Gln85 to Leu103 has biased composition (basic residues). Basic and acidic residues predominate over residues Lys104 to Ala115. Positions Gln141 to Pro152 are enriched in polar residues. Ser204 is subject to Phosphoserine; by plk1. 2 disordered regions span residues Pro260 to Ser291 and Arg314 to Lys337.

It belongs to the TPX2 family. In terms of assembly, associates with microtubules. Interacts with aurka and plk1. Interacts with kif15. Post-translationally, phosphorylated during mitosis. Hyperphosphorylated upon assembly of microtubules.

It localises to the nucleus. The protein resides in the cytoplasm. The protein localises to the cytoskeleton. Its subcellular location is the spindle. It is found in the spindle pole. In terms of biological role, spindle assembly factor. Required for normal assembly of mitotic spindles. Mediates the binding kif15 and aurka to spindle microtubules. Required for targeting kif15 to microtubule minus ends. Activates aurka by promoting its autophosphorylation and protects the phosphorylated residue against dephosphorylation. The polypeptide is Targeting protein for Xklp2-B (tpx2-b) (Xenopus laevis (African clawed frog)).